Here is a 39-residue protein sequence, read N- to C-terminus: Pro-opiomelanocortin (39 aa).

S1 carries the N-acetylserine modification. The residue at position 13 (V13) is a Valine amide. Position 31 is a phosphoserine (S31).

It belongs to the POMC family. In terms of tissue distribution, expressed in the pituitary gland.

It localises to the secreted. Functionally, precursor protein for pituitary hormones that regulate stress and environmental adaptation. In terms of biological role, stimulates the adrenal glands to release cortisol. Anorexigenic peptide. Increases the pigmentation of skin by increasing melanin production in melanocytes. The protein is Pro-opiomelanocortin (POMC) of Oryctolagus cuniculus (Rabbit).